The sequence spans 162 residues: Transmembrane protein 92 (162 aa).

A signal peptide spans 1-22; the sequence is MLDTWVWGTLTLTFGLLSSLQG. Over 23–63 the chain is Extracellular; sequence VSFNETANTCDILNCPKGFTCCVKECCPERKVWDPANDRFR. The chain crosses the membrane as a helical span at residues 64 to 84; the sequence is FLVILACIIFPILFICALVSL. Topologically, residues 85 to 162 are cytoplasmic; sequence FCPNCTELQH…QMRGRAYATL (78 aa). The disordered stretch occupies residues 134 to 162; it reads TPPTEPPPPYSLRPEGPAGQMRGRAYATL.

The protein resides in the membrane. This is Transmembrane protein 92 (Tmem92) from Mus musculus (Mouse).